The following is a 350-amino-acid chain: Deoxyhypusine synthase-like protein (350 aa).

The protein belongs to the deoxyhypusine synthase family.

The chain is Deoxyhypusine synthase-like protein from Chlorobaculum parvum (strain DSM 263 / NCIMB 8327) (Chlorobium vibrioforme subsp. thiosulfatophilum).